Reading from the N-terminus, the 1408-residue chain is ABC multidrug transporter MDR1 (1408 aa).

Positions Met1–Gly13 are enriched in low complexity. Positions Met1–His103 are disordered. The segment covering Leu17–His38 has biased composition (basic and acidic residues). 2 helical membrane passes run Phe147 to Gly167 and Leu223 to Trp243. In terms of domain architecture, ABC transmembrane type-1 1 spans Val157–Lys464. An N-linked (GlcNAc...) asparagine glycan is attached at Asn244. Helical transmembrane passes span Lys296–Val316, Leu321–Thr341, Ile408–Val428, and Gly436–Ala456. Positions Ile499 to Asn744 constitute an ABC transporter 1 domain. ATP is bound at residue Gly534–Ser541. 2 helical membrane passes run Ile838–Phe858 and Leu882–Phe902. An ABC transmembrane type-1 2 domain is found at Ile838–Lys1125. Asn934 carries N-linked (GlcNAc...) asparagine glycosylation. 4 helical membrane-spanning segments follow: residues Gly952–Cys972, Ile973–Leu993, Gly1072–Gly1092, and Phe1099–Phe1119. Residues Asn1127 and Asn1182 are each glycosylated (N-linked (GlcNAc...) asparagine). Residues Val1162–Met1402 form the ABC transporter 2 domain. Gly1197 to Ser1204 lines the ATP pocket. N-linked (GlcNAc...) asparagine glycosylation is present at Asn1404.

It belongs to the ABC transporter superfamily. ABCB family. Multidrug resistance exporter (TC 3.A.1.201) subfamily.

It is found in the cell membrane. It carries out the reaction itraconazole(in) + ATP + H2O = itraconazole(out) + ADP + phosphate + H(+). The enzyme catalyses voriconazole(in) + ATP + H2O = voriconazole(out) + ADP + phosphate + H(+). It catalyses the reaction fluconazole(in) + ATP + H2O = fluconazole(out) + ADP + phosphate + H(+). In terms of biological role, pleiotropic ABC efflux transporter that confers resistance to structurally and functionally unrelated compounds including azoles such as fluconazole (FLC), itraconazole (ITC), posaconazole (POS), nocodazole and voriconazole (VRC). The protein is ABC multidrug transporter MDR1 of Cryptococcus deuterogattii (strain R265) (Cryptococcus gattii VGII (strain R265)).